Consider the following 441-residue polypeptide: MYKSRLQELCQQRRWAPPEYTHRCAGPAHAPLFGATVSVNGVEFRTPEDAARSAKEAHNIAAKAAFDHLSSLPLPPPPPPSENQSSYKSQLQIYAQKKGKLLPSYQTIREGPGHASRFKSVVTVDGKAFESPEYFHTVKEAESAAAKLALMSLPQEASSSEQVPVQPLSYKNLLQELAQKHGFSLPVYSTTSDGSVQVPMFKSTVVFQDGSFQGEPANTKKQAEMNAARVAFQHFEDRRKNALSSTVLRGPHLGQGTVHISAGQVKIAEPVFSVPLASTATSHSATGATDRDYHSLGSTNPLPIAKSTNCADVHIQPCEFKDEKPAFPEPKTVLEVMDSSPELTPLEDAYSAPVASTSTVSSSGCGSDPLASASTVNSTGCGSVPLASASTVSSTGCGCSLLTNRVQVYPRRPDLVLPEGATVLPFSDDVWVAVSLPTLNH.

3 DRBM domains span residues 1 to 71, 86 to 155, and 169 to 237; these read MYKS…HLSS, SYKS…SLPQ, and SYKN…HFED. Residues 69–88 are disordered; that stretch reads LSSLPLPPPPPPSENQSSYK.

Binds double-stranded RNA. The sequence is that of Double-stranded RNA-binding protein 1 (DRB1) from Oryza sativa subsp. japonica (Rice).